Here is a 256-residue protein sequence, read N- to C-terminus: Photosystem I chlorophyll a/b-binding protein 5, chloroplastic (256 aa).

A chloroplast-targeting transit peptide spans 1–32; it reads MAVVLRGGITGGFLHHRRDASSVITRRISSVK. N-acetylalanine is present on Ala33. A chlorophyll b-binding site is contributed by Trp49. Residues Phe69 and Glu88 each contribute to the chlorophyll a site. Arg93 provides a ligand contact to chlorophyll b. Transmembrane regions (helical) follow at residues 94-113 and 129-146; these read FAML…TTGI and FAST…MGFA. 2 residues coordinate chlorophyll b: Glu147 and Arg150. Chlorophyll a is bound by residues Lys205, Glu206, Asn209, Arg211, Gln223, and His238. A helical transmembrane segment spans residues 212 to 232; the sequence is LAMMAMLGFFVQASVTHTGPI.

It belongs to the light-harvesting chlorophyll a/b-binding (LHC) protein family. The LHC complex consists of chlorophyll a-b binding proteins. Homodimer. Heterodimer with LHCA2 and, possibly, LHCA3. Can substitute to LHCA4 to form a complex with LHCA1. Binds pigments. Element of the NAD(P)H dehydrogenase-photosystem I supercomplex (NDH-PSI). It depends on Binds at least 14 chlorophylls (8 Chl-a and 6 Chl-b) and carotenoids such as lutein and neoxanthin. as a cofactor. Post-translationally, photoregulated by reversible phosphorylation of its threonine residues.

The protein resides in the plastid. It localises to the chloroplast thylakoid membrane. In terms of biological role, the light-harvesting complex (LHC) functions as a light receptor, it captures and delivers excitation energy to photosystems with which it is closely associated. Seems involved in the function of the photosystem I in low light conditions, when other LHCA proteins are less abundant. Required, together with LHCA6, for the formation of a full-size NAD(P)H dehydrogenase-photosystem I supercomplex (NDH-PSI) that triggers cyclic and chlororespiratory electron transport in chloroplast thylakoids, especially under stress conditions (e.g. increased light intensity). The chain is Photosystem I chlorophyll a/b-binding protein 5, chloroplastic from Arabidopsis thaliana (Mouse-ear cress).